A 59-amino-acid polypeptide reads, in one-letter code: MAEEILNREYEVEYGGKRYWLRPSKAWVLQPPGKPGVVIALFKLPDGRTVRKAIMRLPP.

This sequence belongs to the Cren7 family. Monomer. In terms of processing, methylated at multiple sites, to varying extents.

The protein resides in the chromosome. The protein localises to the cytoplasm. Functionally, a chromatin protein, binds double-stranded DNA without sequence specificity. Constrains negative DNA supercoils. In Pyrobaculum neutrophilum (strain DSM 2338 / JCM 9278 / NBRC 100436 / V24Sta) (Thermoproteus neutrophilus), this protein is Chromatin protein Cren7.